A 683-amino-acid chain; its full sequence is Cytoskeleton-associated protein 2 (683 aa).

Disordered regions lie at residues 1–28 (MSTP…QRRQ) and 153–175 (NSKK…KKPV). 2 positions are modified to phosphoserine: serine 178 and serine 190. Disordered stretches follow at residues 214–236 (KATK…SSNM) and 336–403 (EKSE…EKPV). A compositionally biased stretch (polar residues) spans 219 to 236 (QPVNTSSVTVKSNRSSNM). 2 stretches are compositionally biased toward basic and acidic residues: residues 336–345 (EKSEPVDQRR) and 362–376 (ETSE…EWKA). Serine 534 is modified (phosphoserine). 2 positions are modified to phosphothreonine: threonine 579 and threonine 582. At serine 595 the chain carries Phosphoserine. 2 positions are modified to phosphothreonine: threonine 596 and threonine 597. A Phosphotyrosine modification is found at tyrosine 599. At serine 602 the chain carries Phosphoserine.

This sequence belongs to the CKAP2 family. As to quaternary structure, associates with alpha- and beta-tubulins. Abundant in testis, thymus, and in tumor derived cell lines, while barely detectable in liver, prostate, and kidney.

Its subcellular location is the cytoplasm. It localises to the cytoskeleton. The protein resides in the spindle. It is found in the spindle pole. Possesses microtubule stabilizing properties. Involved in regulating aneuploidy, cell cycling, and cell death in a p53/TP53-dependent manner. The polypeptide is Cytoskeleton-associated protein 2 (Homo sapiens (Human)).